Reading from the N-terminus, the 444-residue chain is Spermidine/putrescine import ATP-binding protein PotA (444 aa).

Positions 11-332 (ISLVDVDKEF…PVNKWVANFI (322 aa)) constitute an ABC transporter domain. ATP is bound at residue 43–50 (GPSGSGKT). An insert region spans residues 111–201 (RIKKKAEEIP…ESFKKKYLTR (91 aa)).

It belongs to the ABC transporter superfamily. Spermidine/putrescine importer (TC 3.A.1.11.1) family. As to quaternary structure, the complex is composed of two ATP-binding proteins (PotA), two transmembrane proteins (PotB and PotC) and a solute-binding protein (PotD).

Its subcellular location is the cell membrane. It carries out the reaction ATP + H2O + polyamine-[polyamine-binding protein]Side 1 = ADP + phosphate + polyamineSide 2 + [polyamine-binding protein]Side 1.. In terms of biological role, part of the ABC transporter complex PotABCD involved in spermidine/putrescine import. Responsible for energy coupling to the transport system. This chain is Spermidine/putrescine import ATP-binding protein PotA, found in Mesomycoplasma hyopneumoniae (strain 232) (Mycoplasma hyopneumoniae).